The chain runs to 275 residues: Phosphite transport system permease protein PtxC (275 aa).

The next 5 helical transmembrane spans lie at 30–50, 88–108, 136–156, 221–241, and 249–269; these read LGQV…VGLL, LAMS…VAFV, LIMG…GVLA, ASTV…MGSL, and VAAI…FSGV. The ABC transmembrane type-1 domain occupies 84-267; the sequence is LIDTLAMSIA…AMVTLVDAFS (184 aa).

Belongs to the binding-protein-dependent transport system permease family.

The protein localises to the cell inner membrane. Its function is as follows. Probably forms part of a binding-protein-dependent phosphite transporter. Probably responsible for the translocation of the substrate across the membrane. This Stutzerimonas stutzeri (Pseudomonas stutzeri) protein is Phosphite transport system permease protein PtxC (ptxC).